Consider the following 557-residue polypeptide: Protein Red (557 aa).

A disordered region spans residues 1–90 (MPERDSEPFS…YAKLRQQEIE (90 aa)). Basic and acidic residues predominate over residues 16–25 (DGHDVDDPHS). Positions 42-53 (TPRAAPTSAPPS) are enriched in low complexity. An N6-acetyllysine mark is found at Lys98 and Lys137. A Glycyl lysine isopeptide (Lys-Gly) (interchain with G-Cter in SUMO2) cross-link involves residue Lys151. The interval 181–205 (KEKEEEELMEKPQKETKKDEDPENK) is disordered. Ser287 is subject to Phosphoserine. Positions 294–303 (RNKKLKKKDK) are enriched in basic residues. The segment at 294–402 (RNKKLKKKDK…PMDVDKGPGS (109 aa)) is disordered. A compositionally biased stretch (basic and acidic residues) spans 304–313 (GKLEEKKPPE). Residues Lys310 and Lys331 each participate in a glycyl lysine isopeptide (Lys-Gly) (interchain with G-Cter in SUMO2) cross-link. The span at 332–398 (TPRDKERERY…VDDEPMDVDK (67 aa)) shows a compositional bias: basic and acidic residues. 17 consecutive repeat copies span residues 342–343 (RE), 344–345 (RE), 346–347 (RD), 348–349 (RE), 350–351 (RD), 352–353 (RD), 354–355 (RE), 356–357 (RD), 358–359 (RE), 360–361 (RD), 362–363 (RE), 364–365 (RE), 366–367 (RE), 368–369 (RD), 370–371 (RE), 372–373 (RE), and 374–375 (RE). Residues 342 to 375 (RERERDRERDRDRERDRERDRERERERDRERERE) are 17 X 2 AA tandem repeats of R-[ED]. Residues Lys386, Lys388, Lys404, and Lys408 each participate in a glycyl lysine isopeptide (Lys-Gly) (interchain with G-Cter in SUMO2) cross-link. 2 positions are modified to phosphoserine: Ser417 and Ser460. Residue Thr485 is modified to Phosphothreonine. Glycyl lysine isopeptide (Lys-Gly) (interchain with G-Cter in SUMO2) cross-links involve residues Lys496, Lys501, and Lys509. Ser536 carries the post-translational modification Phosphoserine. Glycyl lysine isopeptide (Lys-Gly) (interchain with G-Cter in SUMO2) cross-links involve residues Lys541, Lys543, Lys544, and Lys553.

Belongs to the RED family. In terms of assembly, component of the spliceosome B complex. Interacts with SMU1. Interacts with MAD1L1. May interact with DHX15.

It is found in the nucleus. It localises to the nucleoplasm. Its subcellular location is the chromosome. The protein localises to the cytoplasm. The protein resides in the cytoskeleton. It is found in the spindle pole. Involved in pre-mRNA splicing as a component of the spliceosome. Auxiliary spliceosomal protein that regulates selection of alternative splice sites in a small set of target pre-mRNA species. Required for normal mitotic cell cycle progression. Recruits MAD1L1 and MAD2L1 to kinetochores, and is required to trigger the spindle assembly checkpoint. Required for normal accumulation of SMU1. The sequence is that of Protein Red (Ik) from Rattus norvegicus (Rat).